The following is a 239-amino-acid chain: Pyridoxine 5'-phosphate synthase (239 aa).

Residue Asn7 participates in 3-amino-2-oxopropyl phosphate binding. Residue 9-10 (DH) participates in 1-deoxy-D-xylulose 5-phosphate binding. A 3-amino-2-oxopropyl phosphate-binding site is contributed by Arg18. His43 acts as the Proton acceptor in catalysis. 1-deoxy-D-xylulose 5-phosphate-binding residues include Arg45 and His50. Residue Glu70 is the Proton acceptor of the active site. Thr100 is a 1-deoxy-D-xylulose 5-phosphate binding site. His191 (proton donor) is an active-site residue. Residues Gly192 and 213-214 (GH) contribute to the 3-amino-2-oxopropyl phosphate site.

Belongs to the PNP synthase family. As to quaternary structure, homooctamer; tetramer of dimers.

The protein localises to the cytoplasm. It carries out the reaction 3-amino-2-oxopropyl phosphate + 1-deoxy-D-xylulose 5-phosphate = pyridoxine 5'-phosphate + phosphate + 2 H2O + H(+). It participates in cofactor biosynthesis; pyridoxine 5'-phosphate biosynthesis; pyridoxine 5'-phosphate from D-erythrose 4-phosphate: step 5/5. In terms of biological role, catalyzes the complicated ring closure reaction between the two acyclic compounds 1-deoxy-D-xylulose-5-phosphate (DXP) and 3-amino-2-oxopropyl phosphate (1-amino-acetone-3-phosphate or AAP) to form pyridoxine 5'-phosphate (PNP) and inorganic phosphate. This is Pyridoxine 5'-phosphate synthase from Nostoc sp. (strain PCC 7120 / SAG 25.82 / UTEX 2576).